An 89-amino-acid polypeptide reads, in one-letter code: Large ribosomal subunit protein bL27 (89 aa).

This sequence belongs to the bacterial ribosomal protein bL27 family.

The sequence is that of Large ribosomal subunit protein bL27 from Ruegeria sp. (strain TM1040) (Silicibacter sp.).